The following is a 190-amino-acid chain: GTP cyclohydrolase 1 (190 aa).

Residues Cys80, His83, and Cys151 each coordinate Zn(2+).

This sequence belongs to the GTP cyclohydrolase I family. In terms of assembly, toroid-shaped homodecamer, composed of two pentamers of five dimers.

It catalyses the reaction GTP + H2O = 7,8-dihydroneopterin 3'-triphosphate + formate + H(+). Its pathway is cofactor biosynthesis; 7,8-dihydroneopterin triphosphate biosynthesis; 7,8-dihydroneopterin triphosphate from GTP: step 1/1. The chain is GTP cyclohydrolase 1 (folE) from Rickettsia prowazekii (strain Madrid E).